A 221-amino-acid polypeptide reads, in one-letter code: Deoxyribose-phosphate aldolase (221 aa).

The active-site Proton donor/acceptor is the Asp-91. Lys-153 acts as the Schiff-base intermediate with acetaldehyde in catalysis. The active-site Proton donor/acceptor is the Lys-182.

It belongs to the DeoC/FbaB aldolase family. DeoC type 1 subfamily.

It is found in the cytoplasm. It catalyses the reaction 2-deoxy-D-ribose 5-phosphate = D-glyceraldehyde 3-phosphate + acetaldehyde. The protein operates within carbohydrate degradation; 2-deoxy-D-ribose 1-phosphate degradation; D-glyceraldehyde 3-phosphate and acetaldehyde from 2-deoxy-alpha-D-ribose 1-phosphate: step 2/2. Its function is as follows. Catalyzes a reversible aldol reaction between acetaldehyde and D-glyceraldehyde 3-phosphate to generate 2-deoxy-D-ribose 5-phosphate. The protein is Deoxyribose-phosphate aldolase of Clostridium botulinum (strain Eklund 17B / Type B).